A 296-amino-acid chain; its full sequence is NAD kinase (296 aa).

The active-site Proton acceptor is the D72. Residues 72 to 73, 146 to 147, R157, K174, D176, 187 to 192, and Q247 contribute to the NAD(+) site; these read DG, ND, and TAYALS.

The protein belongs to the NAD kinase family. It depends on a divalent metal cation as a cofactor.

It is found in the cytoplasm. The catalysed reaction is NAD(+) + ATP = ADP + NADP(+) + H(+). Functionally, involved in the regulation of the intracellular balance of NAD and NADP, and is a key enzyme in the biosynthesis of NADP. Catalyzes specifically the phosphorylation on 2'-hydroxyl of the adenosine moiety of NAD to yield NADP. The polypeptide is NAD kinase (Pseudomonas putida (strain W619)).